Consider the following 229-residue polypeptide: Potassium/proton antiporter CemA (229 aa).

The next 4 membrane-spanning stretches (helical) occupy residues 7–27 (FTSL…SLSF), 114–134 (IICF…LVIL), 145–165 (LSDT…IGFH), and 189–209 (ILSS…KFWV).

Belongs to the CemA family.

The protein localises to the plastid. Its subcellular location is the chloroplast inner membrane. The enzyme catalyses K(+)(in) + H(+)(out) = K(+)(out) + H(+)(in). Contributes to K(+)/H(+) antiport activity by supporting proton efflux to control proton extrusion and homeostasis in chloroplasts in a light-dependent manner to modulate photosynthesis. Prevents excessive induction of non-photochemical quenching (NPQ) under continuous-light conditions. Indirectly promotes efficient inorganic carbon uptake into chloroplasts. In Daucus carota (Wild carrot), this protein is Potassium/proton antiporter CemA.